A 273-amino-acid chain; its full sequence is Undecaprenyl-diphosphatase (273 aa).

7 consecutive transmembrane segments (helical) span residues 6-26 (SLLIAAILGVVEGLTEFLPVS), 45-65 (AKTFEVVIQLGSILAVVVMFW), 90-110 (LTLIHILLGMIPAVVLGLLFH), 116-136 (LFNPINVMYALVVGGLLLIAA), 190-210 (YAASEFSFLLAVPMMMGATAL), 222-242 (GDIPMFAVGFITAFVVALIAI), and 252-272 (ISFIPFAIYRFIVAAAVYVVF).

The protein belongs to the UppP family.

It localises to the cell inner membrane. The catalysed reaction is di-trans,octa-cis-undecaprenyl diphosphate + H2O = di-trans,octa-cis-undecaprenyl phosphate + phosphate + H(+). Functionally, catalyzes the dephosphorylation of undecaprenyl diphosphate (UPP). Confers resistance to bacitracin. The chain is Undecaprenyl-diphosphatase from Escherichia coli O157:H7.